We begin with the raw amino-acid sequence, 551 residues long: Pentatricopeptide repeat-containing protein At3g13150 (551 aa).

The disordered stretch occupies residues 22–67 (ATAKSAKPRSQTKSTKFPSKLKASTASVGDGGQSSNDAKDSKNSKL). A compositionally biased stretch (polar residues) spans 29-48 (PRSQTKSTKFPSKLKASTAS). Over residues 58–67 (DAKDSKNSKL) the composition is skewed to basic and acidic residues. 7 PPR repeats span residues 121–155 (SEDF…NCER), 156–191 (TVKS…GITP), 192–226 (DLVT…GFEP), 227–261 (DLIS…NLSP), 262–296 (NIRS…GISP), 297–331 (DVHT…GLTP), and 332–366 (DTVT…KLLS). 2 disordered regions span residues 409-435 (GKKK…SPDT) and 449-551 (SSSD…LLDD). A compositionally biased stretch (low complexity) spans 415-435 (SSPVSSSAKTTSTPVSSSPDT).

Belongs to the PPR family. P subfamily.

The protein is Pentatricopeptide repeat-containing protein At3g13150 of Arabidopsis thaliana (Mouse-ear cress).